Consider the following 402-residue polypeptide: Zinc finger protein CONSTANS-LIKE 14 (402 aa).

Zn(2+)-binding residues include Cys12, Cys15, Cys35, His40, Cys55, Cys58, Cys78, and His83. The B box-type 1; atypical zinc-finger motif lies at 12 to 54 (CEFCGERTAVLFCRADTAKLCLPCDQHVHSANLLSRKHVRSQI). The B box-type 2; atypical zinc finger occupies 55–97 (CDNCSKEPVSVRCFTDNLVLCQECDWDVHGSCSSSATHERSAV). The disordered stretch occupies residues 287 to 322 (SYQQEDSVHSTSTKGQETSKSNNIPAAIHSHKSSND). Polar residues predominate over residues 295-310 (HSTSTKGQETSKSNNI). Residues 345-372 (VTNADLEQMAQNRDNAMQRYKEKKKTRR) adopt a coiled-coil conformation. The 43-residue stretch at 357-399 (RDNAMQRYKEKKKTRRYDKTIRYETRKARAETRLRVKGRFVKA) folds into the CCT domain.

It belongs to the CONSTANS family.

It is found in the nucleus. The chain is Zinc finger protein CONSTANS-LIKE 14 (COL14) from Arabidopsis thaliana (Mouse-ear cress).